Reading from the N-terminus, the 296-residue chain is Polyamine aminopropyltransferase (296 aa).

The 236-residue stretch at 16–251 (HLWYFEYYTG…GMWSYTFASK (236 aa)) folds into the PABS domain. S-methyl-5'-thioadenosine is bound at residue Q46. Positions 77 and 101 each coordinate spermidine. S-methyl-5'-thioadenosine contacts are provided by residues E121 and 152-153 (NG). The Proton acceptor role is filled by D170. 170 to 173 (DSTD) is a spermidine binding site.

It belongs to the spermidine/spermine synthase family. Homodimer or homotetramer.

It localises to the cytoplasm. The enzyme catalyses S-adenosyl 3-(methylsulfanyl)propylamine + putrescine = S-methyl-5'-thioadenosine + spermidine + H(+). The protein operates within amine and polyamine biosynthesis; spermidine biosynthesis; spermidine from putrescine: step 1/1. Catalyzes the irreversible transfer of a propylamine group from the amino donor S-adenosylmethioninamine (decarboxy-AdoMet) to putrescine (1,4-diaminobutane) to yield spermidine. This chain is Polyamine aminopropyltransferase, found in Thermotoga neapolitana (strain ATCC 49049 / DSM 4359 / NBRC 107923 / NS-E).